Here is a 166-residue protein sequence, read N- to C-terminus: Vasopressin-neurophysin 2-copeptin (166 aa).

A signal peptide spans M1–A19. Residues C20 and C25 are joined by a disulfide bond. Position 28 is a glycine amide (G28). Disulfide bonds link C41/C85, C44/C58, C52/C75, C59/C65, C92/C104, C98/C116, and C105/C110. Residue N133 is glycosylated (N-linked (GlcNAc...) asparagine).

Belongs to the vasopressin/oxytocin family. As to quaternary structure, interacts with vasopressin receptors V1bR/AVPR1B (Ki=85 pM), V1aR/AVPR1A (Ki=0.6 nM) and V2R/AVPR2 (Ki=4.9 nM). Interacts with oxytocin receptor (OXTR) (Ki=110 nM).

It is found in the secreted. Functionally, neurophysin 2 specifically binds vasopressin. Its function is as follows. Vasopressin has a direct antidiuretic action on the kidney, it also causes vasoconstriction of the peripheral vessels. Acts by binding to vasopressin receptors (V1bR/AVPR1B, V1aR/AVPR1A, and V2R/AVPR2). This chain is Vasopressin-neurophysin 2-copeptin (AVP), found in Bos taurus (Bovine).